We begin with the raw amino-acid sequence, 220 residues long: Large ribosomal subunit protein uL1 (220 aa).

Belongs to the universal ribosomal protein uL1 family. As to quaternary structure, part of the 50S ribosomal subunit.

Functionally, binds directly to 23S rRNA. The L1 stalk is quite mobile in the ribosome, and is involved in E site tRNA release. Its function is as follows. Protein L1 is also a translational repressor protein, it controls the translation of the L11 operon by binding to its mRNA. This Ehrlichia ruminantium (strain Gardel) protein is Large ribosomal subunit protein uL1.